The following is a 150-amino-acid chain: Large ribosomal subunit protein uL15 (150 aa).

The interval 1–57 (MTLRLESLKPNKGARRRKLRKGRGIAAGQGASCGFGMRGQKSRSGRPTRPGFEGGQM) is disordered. Positions 12-23 (KGARRRKLRKGR) are enriched in basic residues. The span at 25–37 (IAAGQGASCGFGM) shows a compositional bias: gly residues.

Belongs to the universal ribosomal protein uL15 family. Part of the 50S ribosomal subunit.

In terms of biological role, binds to the 23S rRNA. The polypeptide is Large ribosomal subunit protein uL15 (Synechococcus sp. (strain CC9311)).